The primary structure comprises 1241 residues: ATP-dependent helicase/nuclease subunit A (1241 aa).

The 474-residue stretch at 12 to 485 (SQWTDDQWKA…IDLAKNFRSR (474 aa)) folds into the UvrD-like helicase ATP-binding domain. Residue 33–40 (AAAGSGKT) coordinates ATP. The 301-residue stretch at 505 to 805 (GEIDYDADAE…RIMTIHKSKG (301 aa)) folds into the UvrD-like helicase C-terminal domain.

The protein belongs to the helicase family. AddA subfamily. As to quaternary structure, heterodimer of AddA and AddB/RexB. Requires Mg(2+) as cofactor.

It catalyses the reaction Couples ATP hydrolysis with the unwinding of duplex DNA by translocating in the 3'-5' direction.. The enzyme catalyses ATP + H2O = ADP + phosphate + H(+). Its function is as follows. The heterodimer acts as both an ATP-dependent DNA helicase and an ATP-dependent, dual-direction single-stranded exonuclease. Recognizes the chi site generating a DNA molecule suitable for the initiation of homologous recombination. The AddA nuclease domain is required for chi fragment generation; this subunit has the helicase and 3' -&gt; 5' nuclease activities. This Bacillus cereus (strain G9842) protein is ATP-dependent helicase/nuclease subunit A.